A 177-amino-acid polypeptide reads, in one-letter code: Protein CutA 1, chloroplastic (177 aa).

The N-terminal 60 residues, 1–60 (MPLLPSPLGSLSAAATAAPRRAAAAAGLSPLLLRRRAPIAGALLFLSLGAFAGVRSLSSS), are a transit peptide targeting the chloroplast.

It belongs to the CutA family. Homotrimer.

Its subcellular location is the plastid. The protein resides in the chloroplast. The sequence is that of Protein CutA 1, chloroplastic (CUTA1) from Oryza sativa subsp. japonica (Rice).